The chain runs to 108 residues: MSTHDILHRLSETLASRRHADPEKSYTAKLFSEGPDSILKKIGEECAELIMAAKDGKRLNIVWESTDVIYHVLVLLAFYGLSIEDVSQEMRRREGISGIDEKASRGTK.

It belongs to the PRA-PH family.

The protein localises to the cytoplasm. It catalyses the reaction 1-(5-phospho-beta-D-ribosyl)-ATP + H2O = 1-(5-phospho-beta-D-ribosyl)-5'-AMP + diphosphate + H(+). It participates in amino-acid biosynthesis; L-histidine biosynthesis; L-histidine from 5-phospho-alpha-D-ribose 1-diphosphate: step 2/9. This chain is Phosphoribosyl-ATP pyrophosphatase, found in Dechloromonas aromatica (strain RCB).